The sequence spans 361 residues: uncharacterized protein (361 aa).

41–48 (GPLNSGKT) is an ATP binding site.

This sequence belongs to the archaeal ATPase family.

This is an uncharacterized protein from Methanocaldococcus jannaschii (strain ATCC 43067 / DSM 2661 / JAL-1 / JCM 10045 / NBRC 100440) (Methanococcus jannaschii).